The primary structure comprises 182 residues: MVLIDYSKLSKEVAYALRHAPWEYGLELDAEGWVDINQLLSSLHECEKWKKVSEHDLHVMIEKSDKKRYEISNGKIRALYGHSIPQRIIKEQKCPPEVLYHGTARRFVKSIKEKGLQPQGRQYVHLSADVETALQVGKRRDIKPVLLIVNALEAWSEGIKFYLGNDKVWLADAIPSKYIRFE.

This sequence belongs to the KptA/TPT1 family.

Removes the 2'-phosphate from RNA via an intermediate in which the phosphate is ADP-ribosylated by NAD followed by a presumed transesterification to release the RNA and generate ADP-ribose 1''-2''-cyclic phosphate (APPR&gt;P). May function as an ADP-ribosylase. This Acetivibrio thermocellus (strain ATCC 27405 / DSM 1237 / JCM 9322 / NBRC 103400 / NCIMB 10682 / NRRL B-4536 / VPI 7372) (Clostridium thermocellum) protein is Probable RNA 2'-phosphotransferase.